Here is a 445-residue protein sequence, read N- to C-terminus: MSRKYFGTDGIRGRVGEFPITPDFVLKLGWAVGMAFRRQGNCRVLIGKDTRSSGYMFESAFEAGLSASGADTLLLGPMPTPGIAYLTRTFHAEAGVVISASHNPHDDNGIKFFSGQGTKLPDDVELMIEELLDAPMTVVESARLGKVSRINDAAGRYIEFCKSSVPTSTDFNGLKVVLDCANGATYKIAPSVFRELGAEVTVLAASPNGLNINDKCGSTHLDGLQAAVVEHHADLGIAFDGDGDRVMMVDHTGAVVDGDELLFLIARDLQESGRLQGGVVGTLMSNLGLELALQELHIPFVRAKVGDRYVMAELLARNWMLGGENSGHIVCCQNTTTGDAIIAALQVLMALKHRGQTLAEARQGIRKCPQVLINVRFKGENDPLEHPSVKEASVRVTEQMGGRGRVLLRKSGTEPLVRVMVEGDEEASVRAHAEQLAKIVSEVCA.

S101 (phosphoserine intermediate) is an active-site residue. Residues S101, D240, D242, and D244 each contribute to the Mg(2+) site. Residue S101 is modified to Phosphoserine.

It belongs to the phosphohexose mutase family. Requires Mg(2+) as cofactor. Activated by phosphorylation.

It catalyses the reaction alpha-D-glucosamine 1-phosphate = D-glucosamine 6-phosphate. Functionally, catalyzes the conversion of glucosamine-6-phosphate to glucosamine-1-phosphate. The protein is Phosphoglucosamine mutase of Pseudomonas aeruginosa (strain UCBPP-PA14).